Here is a 1188-residue protein sequence, read N- to C-terminus: DNA-directed RNA polymerase subunit beta (1188 aa).

The protein belongs to the RNA polymerase beta chain family. In terms of assembly, the RNAP catalytic core consists of 2 alpha, 1 beta, 1 beta' and 1 omega subunit. When a sigma factor is associated with the core the holoenzyme is formed, which can initiate transcription.

The enzyme catalyses RNA(n) + a ribonucleoside 5'-triphosphate = RNA(n+1) + diphosphate. Its function is as follows. DNA-dependent RNA polymerase catalyzes the transcription of DNA into RNA using the four ribonucleoside triphosphates as substrates. This chain is DNA-directed RNA polymerase subunit beta, found in Streptococcus pyogenes serotype M1.